A 367-amino-acid polypeptide reads, in one-letter code: Outer membrane protein assembly factor BamC (367 aa).

A signal peptide spans 1 to 16 (MRLLPLFLMVTLAASG). Cys-17 carries N-palmitoyl cysteine lipidation. Cys-17 carries the S-diacylglycerol cysteine lipid modification.

It belongs to the BamC family. As to quaternary structure, part of the Bam complex.

The protein localises to the cell outer membrane. Part of the outer membrane protein assembly complex, which is involved in assembly and insertion of beta-barrel proteins into the outer membrane. This Thiobacillus denitrificans (strain ATCC 25259 / T1) protein is Outer membrane protein assembly factor BamC.